A 309-amino-acid polypeptide reads, in one-letter code: MKSITVEKLMKDLNMEELNSIEATALLISTTDLNRPGMQLAGFFDYFAYERIQIIGKVEHRYLETLDTKTRKERLDRMMSYDIPCLIISRGLEVPEELLCTANKYQRKILRSHKNTTKLISKVINYLEDTLAPTITLHGVLMDIYGVGVLITGKSGIGKSETAVELIKRGHLLVADDAVEIKRIGHEVLQGCAPEIIRHMIEVRGIGILDVKSLFGVGAIKIKTDIDLIIDLEEWDSTKSYDRLGLDDNHREILGMKIDEVTIPIKPARNIALIIEVAARNHRQKKMGYHAAQEFNDRLMKSLEEKSQQ.

Active-site residues include His138 and Lys159. Residue 153 to 160 coordinates ATP; it reads GKSGIGKS. Ser160 serves as a coordination point for Mg(2+). The Proton acceptor; for phosphorylation activity. Proton donor; for dephosphorylation activity role is filled by Asp177. An important for the catalytic mechanism of both phosphorylation and dephosphorylation region spans residues 201–210; that stretch reads IEVRGIGILD. Glu202 contributes to the Mg(2+) binding site. Arg243 is a catalytic residue. Residues 264–269 form an important for the catalytic mechanism of dephosphorylation region; it reads PIKPAR.

Belongs to the HPrK/P family. In terms of assembly, homohexamer. The cofactor is Mg(2+).

The enzyme catalyses [HPr protein]-L-serine + ATP = [HPr protein]-O-phospho-L-serine + ADP + H(+). The catalysed reaction is [HPr protein]-O-phospho-L-serine + phosphate + H(+) = [HPr protein]-L-serine + diphosphate. Functionally, catalyzes the ATP- as well as the pyrophosphate-dependent phosphorylation of a specific serine residue in HPr, a phosphocarrier protein of the phosphoenolpyruvate-dependent sugar phosphotransferase system (PTS). HprK/P also catalyzes the pyrophosphate-producing, inorganic phosphate-dependent dephosphorylation (phosphorolysis) of seryl-phosphorylated HPr (P-Ser-HPr). The two antagonistic activities of HprK/P are regulated by several intracellular metabolites, which change their concentration in response to the absence or presence of rapidly metabolisable carbon sources (glucose, fructose, etc.) in the growth medium. Therefore, by controlling the phosphorylation state of HPr, HPrK/P is a sensor enzyme that plays a major role in the regulation of carbon metabolism and sugar transport: it mediates carbon catabolite repression (CCR), and regulates PTS-catalyzed carbohydrate uptake and inducer exclusion. The sequence is that of HPr kinase/phosphorylase from Alkaliphilus metalliredigens (strain QYMF).